We begin with the raw amino-acid sequence, 289 residues long: Ribosomal RNA small subunit methyltransferase A (289 aa).

The S-adenosyl-L-methionine site is built by Asn-21, Leu-23, Gly-48, Glu-69, Asp-94, and Asn-120.

The protein belongs to the class I-like SAM-binding methyltransferase superfamily. rRNA adenine N(6)-methyltransferase family. RsmA subfamily.

The protein localises to the cytoplasm. It carries out the reaction adenosine(1518)/adenosine(1519) in 16S rRNA + 4 S-adenosyl-L-methionine = N(6)-dimethyladenosine(1518)/N(6)-dimethyladenosine(1519) in 16S rRNA + 4 S-adenosyl-L-homocysteine + 4 H(+). In terms of biological role, specifically dimethylates two adjacent adenosines (A1518 and A1519) in the loop of a conserved hairpin near the 3'-end of 16S rRNA in the 30S particle. May play a critical role in biogenesis of 30S subunits. The protein is Ribosomal RNA small subunit methyltransferase A of Actinobacillus pleuropneumoniae serotype 7 (strain AP76).